A 494-amino-acid chain; its full sequence is Aldehyde dehydrogenase family 7 member A1 (494 aa).

Residue 247-252 participates in NAD(+) binding; the sequence is GSSKVG. The active-site Proton acceptor is E269. Catalysis depends on C303, which acts as the Nucleophile.

This sequence belongs to the aldehyde dehydrogenase family. Homotetramer.

The enzyme catalyses an aldehyde + NAD(+) + H2O = a carboxylate + NADH + 2 H(+). In Brassica napus (Rape), this protein is Aldehyde dehydrogenase family 7 member A1 (BTG-26).